The following is a 151-amino-acid chain: Allatostatin-A (151 aa).

Positions 1 to 21 (MNSLHAHLLLLAVCCVGYIAS) are cleaved as a signal peptide. Residues 22-54 (SPVIGQDQRSGDSDADVLLAADEMADNGGDNID) constitute a propeptide that is removed on maturation. 3 positions are modified to leucine amide: leucine 64, leucine 88, and leucine 99. A propeptide spanning residues 103-135 (SDYDYDQDNEIDYRVPPANYLAAERAVRPGRQN) is cleaved from the precursor. A disordered region spans residues 131 to 151 (PGRQNKRTTRPQPFNFGLGRR). Leucine 148 carries the post-translational modification Leucine amide.

It belongs to the allatostatin family.

The protein resides in the secreted. In terms of biological role, may act as a neurotransmitter or neuromodulator. This is Allatostatin-A (AstA) from Drosophila melanogaster (Fruit fly).